A 934-amino-acid polypeptide reads, in one-letter code: UPF0182 protein sync_1321 (934 aa).

9 consecutive transmembrane segments (helical) span residues Ala2–Ile22, Leu45–Trp65, Gly86–Ile106, Phe129–Gly149, Val165–Pro185, Ile208–Trp228, His251–Ser271, Leu300–Val320, and Leu327–Met347.

It belongs to the UPF0182 family.

The protein localises to the cell membrane. The sequence is that of UPF0182 protein sync_1321 from Synechococcus sp. (strain CC9311).